A 125-amino-acid polypeptide reads, in one-letter code: MLRTVLLGKIHRATVTGACLEYVGSISVDSRLLAAAGILPHEQVHVVNLNNGARLVTYAIEASEGSGAVVLNGAAARLAAAGDQVIVLAYGQGTAVELEHHQPQVVYVDAQNRIVSVHRSVEHAG.

Ser-25 acts as the Schiff-base intermediate with substrate; via pyruvic acid in catalysis. Residue Ser-25 is modified to Pyruvic acid (Ser). Thr-57 is a substrate binding site. The active-site Proton donor is the Tyr-58. Position 73–75 (73–75 (GAA)) interacts with substrate.

The protein belongs to the PanD family. In terms of assembly, heterooctamer of four alpha and four beta subunits. The cofactor is pyruvate. In terms of processing, is synthesized initially as an inactive proenzyme, which is activated by self-cleavage at a specific serine bond to produce a beta-subunit with a hydroxyl group at its C-terminus and an alpha-subunit with a pyruvoyl group at its N-terminus.

The protein localises to the cytoplasm. It carries out the reaction L-aspartate + H(+) = beta-alanine + CO2. It functions in the pathway cofactor biosynthesis; (R)-pantothenate biosynthesis; beta-alanine from L-aspartate: step 1/1. Its function is as follows. Catalyzes the pyruvoyl-dependent decarboxylation of aspartate to produce beta-alanine. The sequence is that of Aspartate 1-decarboxylase 2 from Gloeobacter violaceus (strain ATCC 29082 / PCC 7421).